The chain runs to 267 residues: Hydroxyethylthiazole kinase (267 aa).

M46 contacts substrate. ATP-binding residues include R122 and T168. G195 is a substrate binding site.

It belongs to the Thz kinase family. It depends on Mg(2+) as a cofactor.

The catalysed reaction is 5-(2-hydroxyethyl)-4-methylthiazole + ATP = 4-methyl-5-(2-phosphooxyethyl)-thiazole + ADP + H(+). It functions in the pathway cofactor biosynthesis; thiamine diphosphate biosynthesis; 4-methyl-5-(2-phosphoethyl)-thiazole from 5-(2-hydroxyethyl)-4-methylthiazole: step 1/1. In terms of biological role, catalyzes the phosphorylation of the hydroxyl group of 4-methyl-5-beta-hydroxyethylthiazole (THZ). In Moorella thermoacetica (strain ATCC 39073 / JCM 9320), this protein is Hydroxyethylthiazole kinase.